A 166-amino-acid polypeptide reads, in one-letter code: Ubiquitin-conjugating enzyme E2 13 (166 aa).

Residues 4–164 (QACLLLQKQL…VSRCVRKSQE (161 aa)) enclose the UBC core domain. The active-site Glycyl thioester intermediate is the Cys-89.

Belongs to the ubiquitin-conjugating enzyme family.

The enzyme catalyses S-ubiquitinyl-[E1 ubiquitin-activating enzyme]-L-cysteine + [E2 ubiquitin-conjugating enzyme]-L-cysteine = [E1 ubiquitin-activating enzyme]-L-cysteine + S-ubiquitinyl-[E2 ubiquitin-conjugating enzyme]-L-cysteine.. Its pathway is protein modification; protein ubiquitination. Accepts the ubiquitin from the E1 complex and catalyzes its covalent attachment to other proteins. Involved in the formation of multiubiquitin chains. Signal the protein for selective degradation. In Arabidopsis thaliana (Mouse-ear cress), this protein is Ubiquitin-conjugating enzyme E2 13 (UBC13).